The following is a 208-amino-acid chain: Protein TIC 20-II, chloroplastic (208 aa).

A chloroplast-targeting transit peptide spans 1 to 49 (MASLCLSLHQTLTNPLSAPRCRPLSLSFPGSSTFSIRPSSRRATALTTR). A run of 4 helical transmembrane segments spans residues 61–83 (VISI…FLFA), 101–121 (LYRS…LGVV), 134–154 (AMQA…TRIL), and 172–192 (TGVF…SLLG).

This sequence belongs to the Tic20 family. In terms of assembly, part of the Tic complex. In terms of tissue distribution, expressed in leaves, siliques and roots.

It localises to the plastid. Its subcellular location is the chloroplast inner membrane. Functionally, may be involved in protein precursor import into chloroplasts. Not redundant with TIC20-I, TIC20-IV or TIC20-V. The protein is Protein TIC 20-II, chloroplastic (TIC20-II) of Arabidopsis thaliana (Mouse-ear cress).